The sequence spans 508 residues: Cyclin-A1-1 (508 aa).

Positions 1–28 (MSSNLAASRRSSSSSSVAAAAAAKRPAV) are enriched in low complexity. Disordered stretches follow at residues 1 to 40 (MSSN…GKAA) and 82 to 125 (VKKG…ESVL). A compositionally biased stretch (gly residues) spans 29-39 (GEGGGGGGGKA). Low complexity predominate over residues 98 to 111 (ASAVKSASAKPAPA).

Belongs to the cyclin family. Cyclin AB subfamily. In terms of tissue distribution, expressed in the dividing region of the root cap and root apex. Expressed in the intercalary meristem of internodes and in adventitious roots under submergence conditions.

Functionally, involved in the control of the cell cycle at the G2/M (mitosis) transition. The protein is Cyclin-A1-1 (CYCA1-1) of Oryza sativa subsp. japonica (Rice).